Here is a 219-residue protein sequence, read N- to C-terminus: Imidazole glycerol phosphate synthase subunit HisH (219 aa).

In terms of domain architecture, Glutamine amidotransferase type-1 spans 4–216 (TVTVLDYGSG…VDSLPATGRN (213 aa)). The Nucleophile role is filled by C82. Active-site residues include H191 and E193.

As to quaternary structure, heterodimer of HisH and HisF.

It is found in the cytoplasm. The catalysed reaction is 5-[(5-phospho-1-deoxy-D-ribulos-1-ylimino)methylamino]-1-(5-phospho-beta-D-ribosyl)imidazole-4-carboxamide + L-glutamine = D-erythro-1-(imidazol-4-yl)glycerol 3-phosphate + 5-amino-1-(5-phospho-beta-D-ribosyl)imidazole-4-carboxamide + L-glutamate + H(+). It catalyses the reaction L-glutamine + H2O = L-glutamate + NH4(+). Its pathway is amino-acid biosynthesis; L-histidine biosynthesis; L-histidine from 5-phospho-alpha-D-ribose 1-diphosphate: step 5/9. IGPS catalyzes the conversion of PRFAR and glutamine to IGP, AICAR and glutamate. The HisH subunit catalyzes the hydrolysis of glutamine to glutamate and ammonia as part of the synthesis of IGP and AICAR. The resulting ammonia molecule is channeled to the active site of HisF. The polypeptide is Imidazole glycerol phosphate synthase subunit HisH (Renibacterium salmoninarum (strain ATCC 33209 / DSM 20767 / JCM 11484 / NBRC 15589 / NCIMB 2235)).